A 368-amino-acid polypeptide reads, in one-letter code: Phosphate acyltransferase (368 aa).

Belongs to the PlsX family. As to quaternary structure, homodimer. Probably interacts with PlsY.

Its subcellular location is the cytoplasm. It catalyses the reaction a fatty acyl-[ACP] + phosphate = an acyl phosphate + holo-[ACP]. It functions in the pathway lipid metabolism; phospholipid metabolism. Functionally, catalyzes the reversible formation of acyl-phosphate (acyl-PO(4)) from acyl-[acyl-carrier-protein] (acyl-ACP). This enzyme utilizes acyl-ACP as fatty acyl donor, but not acyl-CoA. The polypeptide is Phosphate acyltransferase (Methylibium petroleiphilum (strain ATCC BAA-1232 / LMG 22953 / PM1)).